A 396-amino-acid chain; its full sequence is Elongation factor Tu (396 aa).

Residues 10–206 (KPHVNVGTIG…ALDTYIPTPE (197 aa)) enclose the tr-type G domain. The tract at residues 19–26 (GHVDHGKT) is G1. 19–26 (GHVDHGKT) contacts GTP. Thr-26 lines the Mg(2+) pocket. Positions 60–64 (GITIN) are G2. The G3 stretch occupies residues 81–84 (DCPG). Residues 81-85 (DCPGH) and 136-139 (NKCD) each bind GTP. The segment at 136–139 (NKCD) is G4. Residues 174–176 (SAK) form a G5 region.

It belongs to the TRAFAC class translation factor GTPase superfamily. Classic translation factor GTPase family. EF-Tu/EF-1A subfamily. As to quaternary structure, monomer.

It localises to the cytoplasm. The enzyme catalyses GTP + H2O = GDP + phosphate + H(+). In terms of biological role, GTP hydrolase that promotes the GTP-dependent binding of aminoacyl-tRNA to the A-site of ribosomes during protein biosynthesis. In Burkholderia vietnamiensis (strain G4 / LMG 22486) (Burkholderia cepacia (strain R1808)), this protein is Elongation factor Tu.